The following is a 210-amino-acid chain: Ribosomal RNA small subunit methyltransferase G (210 aa).

Residues Gly-75, Phe-80, 98–100 (EST), 126–127 (AE), and Arg-141 contribute to the S-adenosyl-L-methionine site.

Belongs to the methyltransferase superfamily. RNA methyltransferase RsmG family.

Its subcellular location is the cytoplasm. In terms of biological role, specifically methylates the N7 position of a guanine in 16S rRNA. The polypeptide is Ribosomal RNA small subunit methyltransferase G (Solibacter usitatus (strain Ellin6076)).